We begin with the raw amino-acid sequence, 65 residues long: Large ribosomal subunit protein bL35 (65 aa).

Positions 1 to 40 (MPKMKTNSGSKKRFALTGTGKIKRKHAFHSHILTKKSKKR) are disordered. Over residues 21-40 (KIKRKHAFHSHILTKKSKKR) the composition is skewed to basic residues.

It belongs to the bacterial ribosomal protein bL35 family.

The protein is Large ribosomal subunit protein bL35 of Bacteroides fragilis (strain ATCC 25285 / DSM 2151 / CCUG 4856 / JCM 11019 / LMG 10263 / NCTC 9343 / Onslow / VPI 2553 / EN-2).